The sequence spans 92 residues: Large ribosomal subunit protein bL28 (92 aa).

This sequence belongs to the bacterial ribosomal protein bL28 family.

This Borreliella afzelii (strain PKo) (Borrelia afzelii) protein is Large ribosomal subunit protein bL28.